Consider the following 516-residue polypeptide: Maturase K (516 aa).

Belongs to the intron maturase 2 family. MatK subfamily.

It is found in the plastid. Its subcellular location is the chloroplast. Usually encoded in the trnK tRNA gene intron. Probably assists in splicing its own and other chloroplast group II introns. The sequence is that of Maturase K from Medeola virginiana (Indian cucumber root).